Consider the following 206-residue polypeptide: Pyridoxine/pyridoxamine 5'-phosphate oxidase (206 aa).

Residues Arg-53–Lys-58, Tyr-68–Thr-69, Lys-75, and Gln-97 each bind FMN. Position 58 (Lys-58) interacts with substrate. Substrate is bound by residues Tyr-115, Arg-119, and Ser-123. FMN-binding positions include Gln-132–Ser-133 and Trp-177. Arg-183–His-185 contributes to the substrate binding site. FMN is bound at residue Arg-187.

Belongs to the pyridoxamine 5'-phosphate oxidase family. As to quaternary structure, homodimer. FMN is required as a cofactor.

It carries out the reaction pyridoxamine 5'-phosphate + O2 + H2O = pyridoxal 5'-phosphate + H2O2 + NH4(+). It catalyses the reaction pyridoxine 5'-phosphate + O2 = pyridoxal 5'-phosphate + H2O2. It functions in the pathway cofactor metabolism; pyridoxal 5'-phosphate salvage; pyridoxal 5'-phosphate from pyridoxamine 5'-phosphate: step 1/1. Its pathway is cofactor metabolism; pyridoxal 5'-phosphate salvage; pyridoxal 5'-phosphate from pyridoxine 5'-phosphate: step 1/1. Functionally, catalyzes the oxidation of either pyridoxine 5'-phosphate (PNP) or pyridoxamine 5'-phosphate (PMP) into pyridoxal 5'-phosphate (PLP). This chain is Pyridoxine/pyridoxamine 5'-phosphate oxidase, found in Allorhizobium ampelinum (strain ATCC BAA-846 / DSM 112012 / S4) (Agrobacterium vitis (strain S4)).